The sequence spans 614 residues: Ankyrin repeat domain-containing protein 55 (614 aa).

The disordered stretch occupies residues 1-20 (MMRQATMDFSTPSVFDQQRG). A compositionally biased stretch (polar residues) spans 7–16 (MDFSTPSVFD). ANK repeat units follow at residues 26-55 (VDLTMVYQAASNGDVNALTAVIREDPSILE), 60-89 (EGCTPLMHAVSGRQADTVKLLLKMGANINM), 93-125 (YGRTSLCLATYLGWLEGCVSLLRNGAKHNIPDK), 126-157 (NGRLPLHAATAEPDMRLLTVLLQQSNISEINH), 161-190 (EGMTPLHWAAFHNQPQHTQMLLKKGADPTL), 194-223 (DFKTALHWAVQSGNRILCSIILSHHQGPSI), 230-260 (SGKTCVHIAAAAGFSDIIHELARVPECNLQA), 264-293 (DDRTPLHWAAAAGKAECVQSLLELGMDSNL), and 297-326 (NESTPLAYALYCGHTACVKLLSQESRTEPT). 4 disordered regions span residues 319 to 339 (QESRTEPTRPPPSQSSRPQKK), 354 to 375 (KKEEQRAHQKDPSRDRYREEDT), 454 to 476 (TSHAGLSSAPHHMAQRSQKSRSE), and 564 to 614 (RNNL…SDEN). Basic and acidic residues predominate over residues 354-373 (KKEEQRAHQKDPSRDRYREE). Residue Ser-475 is modified to Phosphoserine.

In Homo sapiens (Human), this protein is Ankyrin repeat domain-containing protein 55 (ANKRD55).